The following is a 383-amino-acid chain: ATP phosphoribosyltransferase regulatory subunit (383 aa).

The protein belongs to the class-II aminoacyl-tRNA synthetase family. HisZ subfamily. In terms of assembly, heteromultimer composed of HisG and HisZ subunits.

It is found in the cytoplasm. Its pathway is amino-acid biosynthesis; L-histidine biosynthesis; L-histidine from 5-phospho-alpha-D-ribose 1-diphosphate: step 1/9. Its function is as follows. Required for the first step of histidine biosynthesis. May allow the feedback regulation of ATP phosphoribosyltransferase activity by histidine. The chain is ATP phosphoribosyltransferase regulatory subunit from Chromobacterium violaceum (strain ATCC 12472 / DSM 30191 / JCM 1249 / CCUG 213 / NBRC 12614 / NCIMB 9131 / NCTC 9757 / MK).